A 574-amino-acid chain; its full sequence is Sulfite reductase [NADPH] hemoprotein beta-component (574 aa).

Cys-439, Cys-445, Cys-484, and Cys-488 together coordinate [4Fe-4S] cluster. Cys-488 is a siroheme binding site.

The protein belongs to the nitrite and sulfite reductase 4Fe-4S domain family. Alpha(8)-beta(8). The alpha component is a flavoprotein, the beta component is a hemoprotein. Siroheme is required as a cofactor. [4Fe-4S] cluster serves as cofactor.

It carries out the reaction hydrogen sulfide + 3 NADP(+) + 3 H2O = sulfite + 3 NADPH + 4 H(+). It functions in the pathway sulfur metabolism; hydrogen sulfide biosynthesis; hydrogen sulfide from sulfite (NADPH route): step 1/1. Component of the sulfite reductase complex that catalyzes the 6-electron reduction of sulfite to sulfide. This is one of several activities required for the biosynthesis of L-cysteine from sulfate. The chain is Sulfite reductase [NADPH] hemoprotein beta-component from Paenibacillus sp. (strain JDR-2).